Here is a 179-residue protein sequence, read N- to C-terminus: GTP-dependent dephospho-CoA kinase (179 aa).

Positions 49, 50, 51, 68, 70, and 126 each coordinate GTP.

This sequence belongs to the GTP-dependent DPCK family.

It catalyses the reaction 3'-dephospho-CoA + GTP = GDP + CoA + H(+). The protein operates within cofactor biosynthesis; coenzyme A biosynthesis. Its function is as follows. Catalyzes the GTP-dependent phosphorylation of the 3'-hydroxyl group of dephosphocoenzyme A to form coenzyme A (CoA). The sequence is that of GTP-dependent dephospho-CoA kinase from Pyrococcus abyssi (strain GE5 / Orsay).